A 206-amino-acid polypeptide reads, in one-letter code: Somatotropin (206 aa).

A signal peptide spans 1-18; that stretch reads MLDRVVVLLSVLCLGVSS. Gln-19 is subject to Pyrrolidone carboxylic acid. Residue His-37 participates in Zn(2+) binding. Residues Cys-70 and Cys-179 are joined by a disulfide bond. Glu-188 is a binding site for Zn(2+). Cys-196 and Cys-204 are disulfide-bonded.

It belongs to the somatotropin/prolactin family.

Its subcellular location is the secreted. Functionally, growth hormone plays an important role in growth control and is involved in the regulation of several anabolic processes. Implicated as an osmoregulatory substance important for seawater adaptation. This Pseudocaranx dentex (White trevally) protein is Somatotropin (gh).